The following is a 230-amino-acid chain: Orotidine 5'-phosphate decarboxylase (230 aa).

Residues Asp-9, Lys-31, 58 to 67 (DLKFFDIPNT), Thr-120, Arg-180, Gln-188, Gly-208, and Arg-209 contribute to the substrate site. Lys-60 acts as the Proton donor in catalysis.

The protein belongs to the OMP decarboxylase family. Type 1 subfamily. As to quaternary structure, homodimer.

The catalysed reaction is orotidine 5'-phosphate + H(+) = UMP + CO2. Its pathway is pyrimidine metabolism; UMP biosynthesis via de novo pathway; UMP from orotate: step 2/2. Its function is as follows. Catalyzes the decarboxylation of orotidine 5'-monophosphate (OMP) to uridine 5'-monophosphate (UMP). This chain is Orotidine 5'-phosphate decarboxylase, found in Maridesulfovibrio salexigens (strain ATCC 14822 / DSM 2638 / NCIMB 8403 / VKM B-1763) (Desulfovibrio salexigens).